We begin with the raw amino-acid sequence, 153 residues long: Insulin-like growth factor 1 (153 aa).

Positions G49–T77 are b. 3 disulfide bridges follow: C54-C96, C66-C109, and C95-C100. Positions G78–T89 are c. Positions G90–A110 are a. A d region spans residues P111–A118. A propeptide spans R119–M153 (e peptide). A disordered region spans residues S120–M153. A compositionally biased stretch (basic and acidic residues) spans R125–L138. The span at S142–M153 shows a compositional bias: polar residues.

It belongs to the insulin family. Forms a ternary complex with IGFR1 and ITGAV:ITGB3. Forms a ternary complex with IGFR1 and ITGA6:ITGB4. Forms a ternary complex with IGFBP3 and ALS.

The protein localises to the secreted. Functionally, the insulin-like growth factors, isolated from plasma, are structurally and functionally related to insulin but have a much higher growth-promoting activity. May be a physiological regulator of [1-14C]-2-deoxy-D-glucose (2DG) transport and glycogen synthesis in osteoblasts. Stimulates glucose transport in bone-derived osteoblastic (PyMS) cells and is effective at much lower concentrations than insulin, not only regarding glycogen and DNA synthesis but also with regard to enhancing glucose uptake. May play a role in synapse maturation. Ca(2+)-dependent exocytosis of IGF1 is required for sensory perception of smell in the olfactory bulb. Acts as a ligand for IGF1R. Binds to the alpha subunit of IGF1R, leading to the activation of the intrinsic tyrosine kinase activity which autophosphorylates tyrosine residues in the beta subunit thus initiating a cascade of down-stream signaling events leading to activation of the PI3K-AKT/PKB and the Ras-MAPK pathways. Binds to integrins ITGAV:ITGB3 and ITGA6:ITGB4. Its binding to integrins and subsequent ternary complex formation with integrins and IGFR1 are essential for IGF1 signaling. Induces the phosphorylation and activation of IGFR1, MAPK3/ERK1, MAPK1/ERK2 and AKT1. As part of the MAPK/ERK signaling pathway, acts as a negative regulator of apoptosis in cardiomyocytes via promotion of STUB1/CHIP-mediated ubiquitination and degradation of ICER-type isoforms of CREM. This is Insulin-like growth factor 1 from Rhinopithecus roxellana (Golden snub-nosed monkey).